Consider the following 744-residue polypeptide: Catalase A (744 aa).

Residues His93 and Asn166 contribute to the active site. Tyr380 serves as a coordination point for heme.

It belongs to the catalase family. It depends on heme as a cofactor.

The protein resides in the peroxisome matrix. It carries out the reaction 2 H2O2 = O2 + 2 H2O. Its function is as follows. Catalyzes the degradation of hydrogen peroxide (H(2)O(2)) generated by peroxisomal oxidases to water and oxygen, thereby protecting cells from the toxic effects of hydrogen peroxide. The polypeptide is Catalase A (catA) (Emericella nidulans (strain FGSC A4 / ATCC 38163 / CBS 112.46 / NRRL 194 / M139) (Aspergillus nidulans)).